Consider the following 455-residue polypeptide: SVGFKAGVKDYKLTYYTPDYETKDTDILAAFRVTPQPGVPPEEAGAEVAAESSTGTWTTVWTDGLTSLDRYKGRCYHIEPVAGEENQYIAYVAYPLDLFEEGSVTNMFTSIVGNVFGFKALRALRLEDLRIPTAYTKTFQGPPHGIQVERDKLNKYGRPLLGCTIKPKLGLSAKNYGRAVYECLRGGLDFTKDDENVNSQPFMRWRDRFLFCAEAIYKAQAETGEIKGHYLNATAGTCEEMIKRAVFARELGVPIIMHDYLTGGFTANTSLAHYCRDNGLLLHIHRAMHAVIDRQKNHGMHFRVLAKALRLSGGDHIHAGTVVGKLEGEREITLGFVDLLRDDFIEKDRSRGIYFTQDWVSLPGVLPVASGGIHVWHMPALTEIFGDDSVLQFGGGTLGHPWGNAPGAVANRVALEACVQARNEGRDLAREGNEIIREASKWSPEFAAACEVWKE.

Lys-5 is subject to N6,N6,N6-trimethyllysine. Positions 114 and 164 each coordinate substrate. The active-site Proton acceptor is the Lys-166. Substrate is bound at residue Lys-168. Mg(2+)-binding residues include Lys-192, Asp-194, and Glu-195. Lys-192 carries the N6-carboxylysine modification. His-285 serves as the catalytic Proton acceptor. Positions 286, 318, and 370 each coordinate substrate.

Belongs to the RuBisCO large chain family. Type I subfamily. Heterohexadecamer of 8 large chains and 8 small chains; disulfide-linked. The disulfide link is formed within the large subunit homodimers. The cofactor is Mg(2+). Post-translationally, the disulfide bond which can form in the large chain dimeric partners within the hexadecamer appears to be associated with oxidative stress and protein turnover.

Its subcellular location is the plastid. It is found in the chloroplast. It catalyses the reaction 2 (2R)-3-phosphoglycerate + 2 H(+) = D-ribulose 1,5-bisphosphate + CO2 + H2O. It carries out the reaction D-ribulose 1,5-bisphosphate + O2 = 2-phosphoglycolate + (2R)-3-phosphoglycerate + 2 H(+). RuBisCO catalyzes two reactions: the carboxylation of D-ribulose 1,5-bisphosphate, the primary event in carbon dioxide fixation, as well as the oxidative fragmentation of the pentose substrate in the photorespiration process. Both reactions occur simultaneously and in competition at the same active site. In Brownea coccinea (Rose of Venezuela), this protein is Ribulose bisphosphate carboxylase large chain.